The sequence spans 254 residues: MAQSGAKAADLSREPPGEQKPSPSSRQNEEDLGYNLYPERGSRLKKSTVEESLFTFKHKCQLMLQFAMDTSPYAKLLLGAMKSSGCTVFKDRHFSCEDCDGTVSGGFDAATSQIVLCQNNIHQQAHMNRVVTHELIHAFDHCRAQVDWFSNYRHLACSEIRAANLSGDCSFINEFSRFNFGLRKHHQECVRGRALRSILAVRRVSREEAERVVDEVFDSCFNDHAPFGRIPHSKKDAKFAHRDFENRDRYYANL.

The disordered stretch occupies residues 1-32 (MAQSGAKAADLSREPPGEQKPSPSSRQNEEDL). Residue His-133 coordinates a divalent metal cation. Residue Glu-134 is part of the active site. His-137 contacts a divalent metal cation.

Belongs to the peptidase M76 family.

This Danio rerio (Zebrafish) protein is Mitochondrial inner membrane protease ATP23 homolog (atp23).